The sequence spans 95 residues: Small ribosomal subunit protein bS20 (95 aa).

The protein belongs to the bacterial ribosomal protein bS20 family.

Binds directly to 16S ribosomal RNA. This Ehrlichia chaffeensis (strain ATCC CRL-10679 / Arkansas) protein is Small ribosomal subunit protein bS20.